Consider the following 400-residue polypeptide: Lysophospholipid transporter LplT (400 aa).

The next 12 helical transmembrane spans lie at 19 to 39, 53 to 73, 91 to 111, 139 to 159, 164 to 184, 195 to 213, 227 to 247, 257 to 277, 281 to 301, 304 to 324, 352 to 372, and 373 to 393; these read VIVA…ATLA, VLQM…GQIA, AGAA…LVGI, LMEA…GVLA, IAAL…NLFI, SWRL…VVLW, LFWG…PVAL, YLNA…AKLV, TVSR…IFSL, ALLP…FFVV, NSAM…GVPA, and VAIG…LWIW.

The protein belongs to the major facilitator superfamily. LplT (TC 2.A.1.42) family.

It is found in the cell inner membrane. Functionally, catalyzes the facilitated diffusion of 2-acyl-glycero-3-phosphoethanolamine (2-acyl-GPE) into the cell. This Salmonella schwarzengrund (strain CVM19633) protein is Lysophospholipid transporter LplT.